Consider the following 94-residue polypeptide: MGNCNGASKSNQPDSSRVTQPAAEFRRVAHSSLYGRYNCKCCWFADTNLITCNDHYLCLRCHQVMLRNSDLCNICWKPLPTTITVPVEPTAPPP.

The span at 1–19 (MGNCNGASKSNQPDSSRVT) shows a compositional bias: polar residues. The disordered stretch occupies residues 1-20 (MGNCNGASKSNQPDSSRVTQ). G2 is lipidated: N-myristoyl glycine; by host. The segment at 39–75 (CKCCWFADTNLITCNDHYLCLRCHQVMLRNSDLCNIC) adopts an RING-type; atypical zinc-finger fold. Positions 89–92 (PTAP) match the PTAP/PSAP motif motif.

This sequence belongs to the arenaviridae Z protein family. In terms of assembly, interacts with protein NP; this interaction probably directs the encapsidated genome to budding sites. Interacts (via RING domain) with polymerase L; this interaction inhibits viral transcription and replication, Z partially blocks the product exit tunnel for the releasing nascent RNA product. Interacts with the glycoprotein complex; this interaction plays a role in virion budding. Interacts with host eIF4E; this interaction results in eIF4E reduced affinity for its substrate, the 5'-m7 G cap structure. Interacts (via late-budding domain) with host TSG101; this interaction is essential for budding and release of viral particles. Interacts with host RPLP0; this interaction may serve to load ribosome-like particles inside the virion. Interacts with host PML; this interaction induces PML bodies redistribution in the cytoplasm upon viral infection. Myristoylation is required for the role of RING finger protein Z in assembly and budding.

It is found in the virion. The protein resides in the host cytoplasm. Its subcellular location is the host perinuclear region. It localises to the host cell membrane. Its function is as follows. Plays a crucial role in virion assembly and budding. Expressed late in the virus life cycle, it acts as an inhibitor of viral transcription and RNA synthesis by interacting with the viral polymerase L. Presumably recruits the NP encapsidated genome to cellular membranes at budding sites via direct interaction with NP. Plays critical roles in the final steps of viral release by interacting with host TSG101, a member of the vacuolar protein-sorting pathway and using other cellular host proteins involved in vesicle formation pathway. The budding of the virus progeny occurs after association of protein Z with the viral glycoprotein complex SSP-GP1-GP2 at the cell periphery, step that requires myristoylation of protein Z. Also selectively represses protein production by associating with host eIF4E. In cell-based minigenome assay, has an inhibitory effect on the ribonucleoprotein machinery (vRNP), which is responsible for the replication and transcription of the viral genome. This is RING finger protein Z from Akodon azarae (Azara's grass mouse).